Reading from the N-terminus, the 97-residue chain is Co-chaperonin GroES (97 aa).

This sequence belongs to the GroES chaperonin family. Heptamer of 7 subunits arranged in a ring. Interacts with the chaperonin GroEL.

The protein resides in the cytoplasm. In terms of biological role, together with the chaperonin GroEL, plays an essential role in assisting protein folding. The GroEL-GroES system forms a nano-cage that allows encapsulation of the non-native substrate proteins and provides a physical environment optimized to promote and accelerate protein folding. GroES binds to the apical surface of the GroEL ring, thereby capping the opening of the GroEL channel. This chain is Co-chaperonin GroES, found in Buchnera aphidicola subsp. Cinara cedri (strain Cc).